Consider the following 438-residue polypeptide: ATP phosphoribosyltransferase regulatory subunit (438 aa).

This sequence belongs to the class-II aminoacyl-tRNA synthetase family. HisZ subfamily. As to quaternary structure, heteromultimer composed of HisG and HisZ subunits.

It is found in the cytoplasm. The protein operates within amino-acid biosynthesis; L-histidine biosynthesis; L-histidine from 5-phospho-alpha-D-ribose 1-diphosphate: step 1/9. Its function is as follows. Required for the first step of histidine biosynthesis. May allow the feedback regulation of ATP phosphoribosyltransferase activity by histidine. This Geobacter sulfurreducens (strain ATCC 51573 / DSM 12127 / PCA) protein is ATP phosphoribosyltransferase regulatory subunit.